Reading from the N-terminus, the 142-residue chain is MSLEQEIKQIVESCGAKLYDIETVSDRGKTIYRVTITAPEGVDLQKCVEISNLISPLLDVHPPVSGDYNLEVSSPGVERKLKKPSHFEHSVGEKVRVTKNDGETIEGVLSDFRDHTLTLQTKNGPIEIPLDQITYAKTIFEW.

Belongs to the RimP family.

Its subcellular location is the cytoplasm. Its function is as follows. Required for maturation of 30S ribosomal subunits. This is Ribosome maturation factor RimP from Nitratiruptor sp. (strain SB155-2).